Reading from the N-terminus, the 1090-residue chain is Telomerase reverse transcriptase (1090 aa).

The interval 184-301 is disordered; it reads GFLLRPPSRK…PLEGGPSWRS (118 aa). Residues 190–204 show a composition bias toward basic residues; that stretch reads PSRKHKSFQVGKKTR. Basic and acidic residues-rich tracts occupy residues 218–232 and 252–262; these read EESRKRRRVESEVST and HHEERRQHEAV. Pro residues predominate over residues 281 to 294; sequence KPPPETSAAPPPLE. A TFLY; involved in RNA binding motif is present at residues 316 to 321; that stretch reads TLGFLY. Interaction with RNA template regions lie at residues 371 to 376 and 477 to 503; these read LPLRYF and WKIKVMDCDWLKLRRTAGRFPPSELAY. The 325-residue stretch at 569 to 893 folds into the Reverse transcriptase domain; the sequence is SPAQVASLPK…CLFPWCGLLL (325 aa). Mg(2+)-binding residues include aspartate 666, aspartate 826, and aspartate 827.

Belongs to the reverse transcriptase family. Telomerase subfamily. As to quaternary structure, catalytic subunit of the telomerase holoenzyme complex composed minimally of TERT and the telomerase RNA template component (TERC). In terms of tissue distribution, expressed at highest levels in gonads and brain, and at lower levels in heart, spleen, kidney, gill, muscle and skin. Detected in embryonic stem cell lines before and after differentiation. Isoform F is expressed in gonads, with higher levels in testis relative to ovary, but is not detected in other tissues. Isoform B is expressed predominantly in testis. Isoform C is up-regulated in embryonic stem cell lines after differentiation.

It localises to the nucleus. It is found in the chromosome. The protein localises to the telomere. It carries out the reaction DNA(n) + a 2'-deoxyribonucleoside 5'-triphosphate = DNA(n+1) + diphosphate. Telomerase is a ribonucleoprotein enzyme essential for the replication of chromosome termini in most eukaryotes. It elongates telomeres. It is a reverse transcriptase that adds simple sequence repeats to chromosome ends by copying a template sequence within the RNA component of the enzyme. This chain is Telomerase reverse transcriptase, found in Oryzias latipes (Japanese rice fish).